A 466-amino-acid polypeptide reads, in one-letter code: Ribulose bisphosphate carboxylase large chain (466 aa).

N6,N6,N6-trimethyllysine is present on K5. 2 residues coordinate substrate: N114 and T164. Catalysis depends on K166, which acts as the Proton acceptor. K168 serves as a coordination point for substrate. Mg(2+)-binding residues include K192, D194, and E195. Residue K192 is modified to N6-carboxylysine. H285 (proton acceptor) is an active-site residue. Residues R286, H318, and S370 each coordinate substrate.

Belongs to the RuBisCO large chain family. Type I subfamily. In terms of assembly, heterohexadecamer of 8 large chains and 8 small chains; disulfide-linked. The disulfide link is formed within the large subunit homodimers. The cofactor is Mg(2+). In terms of processing, the disulfide bond which can form in the large chain dimeric partners within the hexadecamer appears to be associated with oxidative stress and protein turnover.

It is found in the plastid. The protein localises to the chloroplast. It carries out the reaction 2 (2R)-3-phosphoglycerate + 2 H(+) = D-ribulose 1,5-bisphosphate + CO2 + H2O. The catalysed reaction is D-ribulose 1,5-bisphosphate + O2 = 2-phosphoglycolate + (2R)-3-phosphoglycerate + 2 H(+). RuBisCO catalyzes two reactions: the carboxylation of D-ribulose 1,5-bisphosphate, the primary event in carbon dioxide fixation, as well as the oxidative fragmentation of the pentose substrate in the photorespiration process. Both reactions occur simultaneously and in competition at the same active site. The sequence is that of Ribulose bisphosphate carboxylase large chain from Tropaeolum majus (Common nasturtium).